Consider the following 238-residue polypeptide: MTDPVYRRVVIKLSGEYLAGQQGFGIDQPTVDRVADDLIAARHLGTEVAVVIGGGNIVRGVEVSSRGVSRPTGDTMGMLATMMNCLALEAAIERKGTPARTLSAFVMPEISELFTRTAAHKYLAEGRIVLLGGGTGNPFFTTDTTAVLRAAEIGAQAVLKATNVDGVYSADPKKDPTATRFDRLTHSQAIEGGYKVMDATAFALARETSLPIIVFSIAEPGSIGAILRGIGHGTIVAG.

12-15 (KLSG) lines the ATP pocket. The interval 20-25 (GQQGFG) is involved in allosteric activation by GTP. Gly54 contributes to the UMP binding site. 2 residues coordinate ATP: Gly55 and Arg59. Residues Asp74 and 135–142 (TGNPFFTT) contribute to the UMP site. 4 residues coordinate ATP: Thr162, Asn163, Tyr168, and Asp171.

The protein belongs to the UMP kinase family. In terms of assembly, homohexamer.

It localises to the cytoplasm. The catalysed reaction is UMP + ATP = UDP + ADP. The protein operates within pyrimidine metabolism; CTP biosynthesis via de novo pathway; UDP from UMP (UMPK route): step 1/1. Its activity is regulated as follows. Allosterically activated by GTP. Inhibited by UTP. Its function is as follows. Catalyzes the reversible phosphorylation of UMP to UDP. The polypeptide is Uridylate kinase (Bradyrhizobium diazoefficiens (strain JCM 10833 / BCRC 13528 / IAM 13628 / NBRC 14792 / USDA 110)).